The chain runs to 80 residues: Serine palmitoyltransferase small subunit A-A (80 aa).

Over 1–21 (MKVLCEDVNGPRSSLGRAWSH) the chain is Cytoplasmic. A helical transmembrane segment spans residues 22-38 (MSWLYYQYLLVTALYML). The Lumenal segment spans residues 39 to 43 (EPWER). The chain crosses the membrane as a helical span at residues 44 to 66 (TVFNSMLVSIVGMALYTGYIFMP). At 67-80 (QHILAILHYFEIVQ) the chain is on the cytoplasmic side.

This sequence belongs to the SPTSS family. SPTSSA subfamily. As to quaternary structure, component of the serine palmitoyltransferase (SPT) complex, which is composed of SPTLC1, SPTLC2 or SPTLC3 and SPTSSA or SPTSSB. The heterodimer consisting of SPTLC1 and SPTLC2/SPTLC3 forms the catalytic core of the enzyme, while SPTSSA or SPTSSB subunits determine substrate specificity. SPT also interacts with ORMDL proteins, especially ORMDL3, which negatively regulate SPT activity in the presence of ceramides.

The protein localises to the endoplasmic reticulum membrane. It functions in the pathway lipid metabolism; sphingolipid metabolism. Its function is as follows. Component of the serine palmitoyltransferase multisubunit enzyme (SPT) that catalyzes the initial and rate-limiting step in sphingolipid biosynthesis by condensing L-serine and activated acyl-CoA (most commonly palmitoyl-CoA) to form long-chain bases. The SPT complex is composed of SPTLC1, SPTLC2 or SPTLC3 and SPTSSA or SPTSSB. Within this complex, the heterodimer consisting of SPTLC1 and SPTLC2/SPTLC3 forms the catalytic core. Within the SPT complex, SPTSSA stimulates the catalytic activity and plays a role in substrate specificity, which depends upon the overall complex composition. The SPTLC1-SPTLC2-SPTSSA complex shows a strong preference for C16-CoA substrate, while the SPTLC1-SPTLC3-SPTSSA isozyme uses both C14-CoA and C16-CoA as substrates, with a slight preference for C14-CoA. Independently of its action as a SPT component, may be involved in MBOAT7 localization to mitochondria-associated membranes, a membrane bridge between the endoplasmic reticulum and mitochondria, may hence affect MBOAT7-catalyzed incorporation of arachidonic acid into phosphatidylinositol. The polypeptide is Serine palmitoyltransferase small subunit A-A (sptssa-a) (Xenopus laevis (African clawed frog)).